The primary structure comprises 271 residues: Aquaporin-11 (271 aa).

At 1 to 14 the chain is on the cytoplasmic side; it reads MSPLLGLRSELQDT. The helical transmembrane segment at 15 to 35 threads the bilayer; that stretch reads CTSLGLMLSVVLLMGLARVVA. Residues 36 to 41 lie on the Lumenal side of the membrane; that stretch reads RQQLHR. Residues 42–62 traverse the membrane as a helical segment; that stretch reads PVAHAFVLEFLATFQLCCCTH. Residues 63–74 are Cytoplasmic-facing; sequence ELQLLSEQHPAH. The helical transmembrane segment at 75 to 95 threads the bilayer; the sequence is PTWTLTLVYFFSLVHGLTLVG. At 96–163 the chain is on the lumenal side; that stretch reads TSSNPCGVMM…ACKNPIRVDL (68 aa). Positions 99–101 match the NPC motif; it reads NPC. Residues 164–184 traverse the membrane as a helical segment; the sequence is LKAVITEAVCSFLFHSALLHF. Topologically, residues 185–194 are cytoplasmic; it reads QEVRTKLRIH. A helical membrane pass occupies residues 195-215; that stretch reads LLAALITFLVYAGGSLTGAVF. Residues 216–218 carry the NPA motif; sequence NPA. Over 216 to 234 the chain is Lumenal; it reads NPALALSLHFMCFDEAFPQ. A helical membrane pass occupies residues 235–255; that stretch reads FFIVYWLAPSLGILLMILMFS. Residues 256-271 lie on the Cytoplasmic side of the membrane; sequence FFLPWLHNNHTINKKE.

It belongs to the MIP/aquaporin (TC 1.A.8) family. AQP11/AQP12 subfamily. Homodimer; disulfide-linked. Homotetramer. Can also form homomultimer. Post-translationally, not glycosylated. In terms of tissue distribution, detected in the sperm head and tail (at protein level). Expressed in subcutaneous adipocytes. Expressed in testis, kidney and ejaculated spermatozoa.

The protein localises to the endoplasmic reticulum membrane. It is found in the cytoplasmic vesicle membrane. Its subcellular location is the cell membrane. The enzyme catalyses H2O(in) = H2O(out). The catalysed reaction is glycerol(in) = glycerol(out). It carries out the reaction H2O2(out) = H2O2(in). In terms of biological role, channel protein that facilitates the transport of water, glycerol and hydrogen peroxide across membrane of cell or organelles guaranteeing intracellular homeostasis in several organes like liver, kidney and brain. In situation of stress, participates in endoplasmic reticulum (ER) homeostasis by regulating redox homeostasis through the transport of hydrogen peroxide across the endoplasmic reticulum membrane thereby regulating the oxidative stress through the NADPH oxidase 2 pathway. Plays a role by maintaining an environment suitable for translation or protein foldings in the ER lumen namely by participating in the PKD1 glycosylation processing resulting in regulation of PKD1 membrane trafficking thereby preventing the accumulation of unfolding protein in ER. Plays a role in the proximal tubule function by regulating its endosomal acidification. May play a role in postnatal kidney development. The protein is Aquaporin-11 of Homo sapiens (Human).